We begin with the raw amino-acid sequence, 119 residues long: Large ribosomal subunit protein uL18 (119 aa).

Belongs to the universal ribosomal protein uL18 family. Part of the 50S ribosomal subunit; part of the 5S rRNA/L5/L18/L25 subcomplex. Contacts the 5S and 23S rRNAs.

This is one of the proteins that bind and probably mediate the attachment of the 5S RNA into the large ribosomal subunit, where it forms part of the central protuberance. The sequence is that of Large ribosomal subunit protein uL18 from Chlorobaculum tepidum (strain ATCC 49652 / DSM 12025 / NBRC 103806 / TLS) (Chlorobium tepidum).